Reading from the N-terminus, the 356-residue chain is Glutamine synthetase N-1 (356 aa).

The region spanning V19 to G99 is the GS beta-grasp domain. Residues K106–P356 form the GS catalytic domain.

This sequence belongs to the glutamine synthetase family. In terms of assembly, homooctamer. As to expression, this is a nodule isozyme.

It is found in the cytoplasm. It catalyses the reaction L-glutamate + NH4(+) + ATP = L-glutamine + ADP + phosphate + H(+). The chain is Glutamine synthetase N-1 (Gln-gamma) from Phaseolus vulgaris (Kidney bean).